Reading from the N-terminus, the 216-residue chain is Imidazole glycerol phosphate synthase subunit HisH 1 (216 aa).

The 213-residue stretch at 4-216 folds into the Glutamine amidotransferase type-1 domain; that stretch reads CVLIVDAGLG…LQNFIALNPC (213 aa). Catalysis depends on C84, which acts as the Nucleophile. Residues H195 and E197 contribute to the active site.

Heterodimer of HisH and HisF.

It is found in the cytoplasm. It carries out the reaction 5-[(5-phospho-1-deoxy-D-ribulos-1-ylimino)methylamino]-1-(5-phospho-beta-D-ribosyl)imidazole-4-carboxamide + L-glutamine = D-erythro-1-(imidazol-4-yl)glycerol 3-phosphate + 5-amino-1-(5-phospho-beta-D-ribosyl)imidazole-4-carboxamide + L-glutamate + H(+). The enzyme catalyses L-glutamine + H2O = L-glutamate + NH4(+). It participates in amino-acid biosynthesis; L-histidine biosynthesis; L-histidine from 5-phospho-alpha-D-ribose 1-diphosphate: step 5/9. IGPS catalyzes the conversion of PRFAR and glutamine to IGP, AICAR and glutamate. The HisH subunit provides the glutamine amidotransferase activity that produces the ammonia necessary to HisF for the synthesis of IGP and AICAR. This chain is Imidazole glycerol phosphate synthase subunit HisH 1 (hisH1), found in Prochlorococcus marinus (strain MIT 9313).